The primary structure comprises 211 residues: Acyl-homoserine-lactone synthase (211 aa).

This sequence belongs to the autoinducer synthase family.

It carries out the reaction a fatty acyl-[ACP] + S-adenosyl-L-methionine = an N-acyl-L-homoserine lactone + S-methyl-5'-thioadenosine + holo-[ACP] + H(+). In terms of biological role, required for the synthesis of OHHL (N-(3-oxohexanoyl)-L-homoserine lactone), an autoinducer molecule which binds to TraR and thus acts in the control of conjugal transfer. The polypeptide is Acyl-homoserine-lactone synthase (traI) (Agrobacterium fabrum (strain C58 / ATCC 33970) (Agrobacterium tumefaciens (strain C58))).